We begin with the raw amino-acid sequence, 303 residues long: Phosphoribosylaminoimidazole-succinocarboxamide synthase (303 aa).

Belongs to the SAICAR synthetase family.

The catalysed reaction is 5-amino-1-(5-phospho-D-ribosyl)imidazole-4-carboxylate + L-aspartate + ATP = (2S)-2-[5-amino-1-(5-phospho-beta-D-ribosyl)imidazole-4-carboxamido]succinate + ADP + phosphate + 2 H(+). The protein operates within purine metabolism; IMP biosynthesis via de novo pathway; 5-amino-1-(5-phospho-D-ribosyl)imidazole-4-carboxamide from 5-amino-1-(5-phospho-D-ribosyl)imidazole-4-carboxylate: step 1/2. The polypeptide is Phosphoribosylaminoimidazole-succinocarboxamide synthase (ADE1) (Pichia angusta (Yeast)).